Reading from the N-terminus, the 460-residue chain is GTPase Der (460 aa).

EngA-type G domains are found at residues 3–167 (FTIA…PEPT) and 189–364 (IRVA…AIWN). GTP contacts are provided by residues 9–16 (GRPNVGKS), 56–60 (DTAGL), 119–122 (NKSE), 195–202 (GRPNAGKS), 242–246 (DTAGL), and 307–310 (NKWD). The 85-residue stretch at 365 to 449 (RRVPTAALNR…PIRITLREKA (85 aa)) folds into the KH-like domain.

It belongs to the TRAFAC class TrmE-Era-EngA-EngB-Septin-like GTPase superfamily. EngA (Der) GTPase family. Associates with the 50S ribosomal subunit.

In terms of biological role, GTPase that plays an essential role in the late steps of ribosome biogenesis. The sequence is that of GTPase Der from Nitrobacter hamburgensis (strain DSM 10229 / NCIMB 13809 / X14).